We begin with the raw amino-acid sequence, 275 residues long: Small ribosomal subunit protein uS2 (275 aa).

Positions 244–275 are disordered; the sequence is REGAEASKKKATVKKKAAPRAASGESAEAAAE. A compositionally biased stretch (basic residues) spans 252–261; the sequence is KKATVKKKAA. Low complexity predominate over residues 262–275; sequence PRAASGESAEAAAE.

It belongs to the universal ribosomal protein uS2 family.

This chain is Small ribosomal subunit protein uS2, found in Thioalkalivibrio sulfidiphilus (strain HL-EbGR7).